Here is a 267-residue protein sequence, read N- to C-terminus: Potassium channel regulatory protein (267 aa).

The BTB domain maps to E5–T74.

As to quaternary structure, can form homooligomers. Interacts with KCNA1 (via cytoplasmic N-terminal domain) and KCNA4.

It localises to the endoplasmic reticulum. In terms of biological role, inhibits potassium fluxes in cells. May regulate Kv1 family channel proteins by retaining a fraction of channels in endomembranes. The sequence is that of Potassium channel regulatory protein (KCNRG) from Bos taurus (Bovine).